We begin with the raw amino-acid sequence, 285 residues long: uncharacterized protein (285 aa).

6 residues coordinate Mn(2+): H110, D131, H133, D135, D214, and D216.

The protein belongs to the arginase family. It depends on Mn(2+) as a cofactor.

This is an uncharacterized protein from Methanothermus fervidus.